The primary structure comprises 499 residues: Serine/threonine-protein phosphatase 5 (499 aa).

The segment at 1 to 24 (MAMAEGERTECAETPRDEPPADGT) is disordered. Ala2 carries the N-acetylalanine modification. TPR repeat units lie at residues 28 to 61 (AEEL…NPGN), 62 to 95 (AIYY…DKKY), and 96 to 129 (IKGY…KPND). The interval 184-499 (GKVTITFMKD…ANTLLQLGMM (316 aa)) is catalytic. Residues Asp242, His244, and Asp271 each contribute to the Mn(2+) site. Residue His244 coordinates substrate. Substrate contacts are provided by residues Arg275 and 303 to 304 (NH). Asn303 provides a ligand contact to Mn(2+). The active-site Proton donor/acceptor is His304. His352 serves as a coordination point for Mn(2+). Residues Arg400 and His427 each contribute to the substrate site. Residue His427 participates in Mn(2+) binding. The required for autoinhibition stretch occupies residues 495-499 (QLGMM).

It belongs to the PPP phosphatase family. PP-5 (PP-T) subfamily. In terms of assembly, probably forms a complex composed of chaperones HSP90 and HSP70, co-chaperones STIP1/HOP, CDC37, PPP5C, PTGES3/p23, TSC1 and client protein TSC2. Probably forms a complex composed of chaperones HSP90 and HSP70, co-chaperones CDC37, PPP5C, TSC1 and client protein TSC2, CDK4, AKT, RAF1 and NR3C1; this complex does not contain co-chaperones STIP1/HOP and PTGES3/p23. Part of a complex with HSP90/HSP90AA1 and steroid receptors. Interacts (via TPR repeats) with HSP90AA1 (via TPR repeat-binding motif) or HSPA1A/HSPA1B; the interaction is direct and activates the phosphatase activity. Dissociates from HSPA1A/HSPA1B and HSP90AA1 in response to arachidonic acid. Interacts with CPNE1 (via VWFA domain). Interacts with CDC16, CDC27. Interacts with KLHDC10 (via the 6 Kelch repeats); inhibits the phosphatase activity on MAP3K5. Interacts with ATM and ATR; both interactions are induced by DNA damage and enhance ATM and ATR kinase activity. Interacts with RAD17; reduced by DNA damage. Interacts with nuclear receptors such as NR3C1/GCR and PPARG (activated by agonist); regulates their transactivation activities. Interacts (via TPR repeats) with S100 proteins S100A1, S100A2, S100A6, S100B and S100P; the interactions are calcium-dependent, strongly activate PPP5C phosphatase activity and compete with HSP90AA1 and MAP3K5 interactions. Interacts with SMAD2 and SMAD3 but not with SMAD1; decreases SMAD3 phosphorylation and protein levels. Interacts (via TPR repeats) with CRY1 and CRY2; the interaction with CRY2 down-regulates the phosphatase activity on CSNK1E. Interacts (via TPR repeats) with the active form of RAC1, GNA12 or GNA13; these interactions activate the phosphatase activity and translocate PPP5C to the cell membrane. Interacts with FLCN. Mg(2+) is required as a cofactor. Requires Mn(2+) as cofactor. Post-translationally, activated by at least two different proteolytic cleavages producing a 56 kDa and a 50 kDa form. In terms of tissue distribution, expressed in liver (at protein level) and brain, enriched in suprachiasmatic nuclei.

It localises to the nucleus. It is found in the cytoplasm. The protein resides in the cell membrane. The enzyme catalyses O-phospho-L-seryl-[protein] + H2O = L-seryl-[protein] + phosphate. The catalysed reaction is O-phospho-L-threonyl-[protein] + H2O = L-threonyl-[protein] + phosphate. Its activity is regulated as follows. Autoinhibited. In the autoinhibited state, the TPR domain interacts with the catalytic region and prevents substrate access to the catalytic pocket. Allosterically activated by various polyunsaturated fatty acids, free long-chain fatty-acids and long-chain fatty acyl-CoA esters, arachidonic acid being the most effective activator. HSP90A and probably RAC1, GNA12 and GNA13 can also release the autoinhibition by the TPR repeat. Activation by RAC1, GNA12 and GNA13 is synergistic with the one produced by fatty acids binding. Inhibited by okadaic acid. Functionally, serine/threonine-protein phosphatase that dephosphorylates a myriad of proteins involved in different signaling pathways including the kinases CSNK1E, ASK1/MAP3K5, PRKDC and RAF1, the nuclear receptors NR3C1, PPARG, ESR1 and ESR2, SMAD proteins and TAU/MAPT. Implicated in wide ranging cellular processes, including apoptosis, differentiation, DNA damage response, cell survival, regulation of ion channels or circadian rhythms, in response to steroid and thyroid hormones, calcium, fatty acids, TGF-beta as well as oxidative and genotoxic stresses. Participates in the control of DNA damage response mechanisms such as checkpoint activation and DNA damage repair through, for instance, the regulation ATM/ATR-signaling and dephosphorylation of PRKDC and TP53BP1. Inhibits ASK1/MAP3K5-mediated apoptosis induced by oxidative stress. Plays a positive role in adipogenesis, mainly through the dephosphorylation and activation of PPARG transactivation function. Also dephosphorylates and inhibits the anti-adipogenic effect of NR3C1. Regulates the circadian rhythms, through the dephosphorylation and activation of CSNK1E. May modulate TGF-beta signaling pathway by the regulation of SMAD3 phosphorylation and protein expression levels. Dephosphorylates and may play a role in the regulation of TAU/MAPT. Through their dephosphorylation, may play a role in the regulation of ions channels such as KCNH2. Dephosphorylate FNIP1, disrupting interaction with HSP90AA1/Hsp90. In Mus musculus (Mouse), this protein is Serine/threonine-protein phosphatase 5 (Ppp5c).